Reading from the N-terminus, the 1025-residue chain is Multidrug resistance protein MdtC (1025 aa).

12 helical membrane passes run 3-23 (FFAL…AITL), 333-353 (EVEQ…FLFL), 360-380 (IIPA…MYLC), 387-407 (LSLM…IVVL), 431-451 (VGFT…PLLL), 463-483 (FAVT…TLTP), 528-548 (LVGV…ISIP), 853-873 (VILI…LYES), 875-895 (VHPL…LLAL), 897-917 (LFNA…IGIV), 953-973 (PIMM…LSGG), and 984-1004 (ITIV…TPVV).

Belongs to the resistance-nodulation-cell division (RND) (TC 2.A.6) family. MdtC subfamily. In terms of assembly, part of a tripartite efflux system composed of MdtA, MdtB and MdtC. MdtC forms a heteromultimer with MdtB.

Its subcellular location is the cell inner membrane. Functionally, the MdtABC tripartite complex confers resistance against novobiocin and deoxycholate. The sequence is that of Multidrug resistance protein MdtC from Escherichia coli O1:K1 / APEC.